We begin with the raw amino-acid sequence, 382 residues long: uncharacterized protein (382 aa).

11 helical membrane-spanning segments follow: residues 8 to 28 (VMLL…LNTL), 45 to 65 (MVSS…GYLI), 75 to 95 (YLAS…VGFW), 102 to 122 (FIAG…LMCS), 131 to 151 (LLAA…LLVS), 157 to 177 (LLHV…PLLF), 204 to 224 (LGVN…GLMP), 231 to 251 (GMAN…GILG), 274 to 294 (VVIL…ALFI), 325 to 345 (ALLL…AMLM), and 349 to 369 (SDNL…LMLL).

This sequence belongs to the major facilitator superfamily. YcaD (TC 2.A.1.26) family.

It localises to the cell inner membrane. This is an uncharacterized protein from Salmonella gallinarum (strain 287/91 / NCTC 13346).